Reading from the N-terminus, the 78-residue chain is UPF0335 protein RPR_04100 (78 aa).

Belongs to the UPF0335 family.

This chain is UPF0335 protein RPR_04100, found in Rickettsia peacockii (strain Rustic).